Reading from the N-terminus, the 558-residue chain is Glucose-6-phosphate isomerase (558 aa).

Ala-2 is subject to N-acetylalanine. An N6-acetyllysine modification is found at Lys-12. N6-(2-hydroxyisobutyryl)lysine is present on Lys-34. Position 107 is a phosphoserine (Ser-107). Thr-109 bears the Phosphothreonine mark. Lys-142 is subject to N6-acetyllysine. Residue 159-160 (GS) participates in D-glucose 6-phosphate binding. Phosphoserine; by CK2 is present on Ser-185. Residue 210 to 215 (SKTFTT) coordinates D-glucose 6-phosphate. Thr-250 bears the Phosphothreonine mark. D-glucose 6-phosphate contacts are provided by Gln-354, Glu-358, and His-389. Residue Glu-358 is the Proton donor of the active site. Residue His-389 is part of the active site. Lys-454 is modified (N6-acetyllysine; alternate). The residue at position 454 (Lys-454) is an N6-malonyllysine; alternate. An N6-succinyllysine; alternate modification is found at Lys-454. The residue at position 455 (Ser-455) is a Phosphoserine. A D-glucose 6-phosphate-binding site is contributed by Lys-519. Lys-519 is an active-site residue.

The protein belongs to the GPI family. Homodimer; in the catalytically active form. Monomer in the secreted form. Post-translationally, phosphorylation at Ser-185 by CK2 has been shown to decrease enzymatic activity and may contribute to secretion by a non-classical secretory pathway. ISGylated.

It is found in the cytoplasm. The protein localises to the secreted. The catalysed reaction is alpha-D-glucose 6-phosphate = beta-D-fructose 6-phosphate. It functions in the pathway carbohydrate degradation; glycolysis; D-glyceraldehyde 3-phosphate and glycerone phosphate from D-glucose: step 2/4. In the cytoplasm, catalyzes the conversion of glucose-6-phosphate to fructose-6-phosphate, the second step in glycolysis, and the reverse reaction during gluconeogenesis. Besides it's role as a glycolytic enzyme, also acts as a secreted cytokine: acts as an angiogenic factor (AMF) that stimulates endothelial cell motility. Acts as a neurotrophic factor, neuroleukin, for spinal and sensory neurons. It is secreted by lectin-stimulated T-cells and induces immunoglobulin secretion. The chain is Glucose-6-phosphate isomerase from Macaca fascicularis (Crab-eating macaque).